The chain runs to 217 residues: Uracil-DNA glycosylase (217 aa).

The active-site Proton acceptor is the D62.

Belongs to the uracil-DNA glycosylase (UDG) superfamily. UNG family.

It is found in the cytoplasm. It catalyses the reaction Hydrolyzes single-stranded DNA or mismatched double-stranded DNA and polynucleotides, releasing free uracil.. In terms of biological role, excises uracil residues from the DNA which can arise as a result of misincorporation of dUMP residues by DNA polymerase or due to deamination of cytosine. This chain is Uracil-DNA glycosylase, found in Streptococcus sanguinis (strain SK36).